The primary structure comprises 358 residues: Peptide chain release factor 1 (358 aa).

Glutamine 233 carries the N5-methylglutamine modification.

Belongs to the prokaryotic/mitochondrial release factor family. Post-translationally, methylated by PrmC. Methylation increases the termination efficiency of RF1.

Its subcellular location is the cytoplasm. Functionally, peptide chain release factor 1 directs the termination of translation in response to the peptide chain termination codons UAG and UAA. This is Peptide chain release factor 1 from Lysinibacillus sphaericus (strain C3-41).